Reading from the N-terminus, the 596-residue chain is Nucleotidyltransferase lcsQ (596 aa).

The N-terminal 22 residues, 1–22, are a transit peptide targeting the mitochondrion; it reads MLLRLSPSRMALKRKLDSFLRN. Residues 475–504 form a disordered region; the sequence is IVAHPGKPSQPADVPETPLSSGASKSKNLD.

Belongs to the tRNA nucleotidyltransferase/poly(A) polymerase family.

It is found in the mitochondrion. In terms of biological role, nucleotidyltransferase; part of the gene cluster that mediates the biosynthesis of the lipopeptide antibiotics leucinostatins that show extensive biological activities, including antimalarial, antiviral, antibacterial, antifungal, and antitumor activities, as well as phytotoxic. The function of lcsQ within the leucinostatins biosynthesis has not been identified yet. In Purpureocillium lilacinum (Paecilomyces lilacinus), this protein is Nucleotidyltransferase lcsQ.